Here is a 985-residue protein sequence, read N- to C-terminus: Alpha-glucosidase (985 aa).

The signal sequence occupies residues 1–25 (MVKLTHLLARAWLVPLAYGASQSLL). O-linked (Man) threonine glycosylation occurs at T36. 5 N-linked (GlcNAc...) asparagine glycosylation sites follow: N124, N143, N218, N347, and N422. The active-site Nucleophile is D490. E493 is a catalytic residue. 3 N-linked (GlcNAc...) asparagine glycosylation sites follow: N506, N534, and N537. 2 O-linked (Man) serine glycosylation sites follow: S545 and S550. Residue T559 is glycosylated (O-linked (Man) threonine). A glycan (O-linked (Man) serine) is linked at S560. T561 carries an O-linked (Man) threonine glycan. A glycan (O-linked (Man) serine) is linked at S562. A glycan (O-linked (Man) threonine) is linked at T571. 2 N-linked (GlcNAc...) asparagine glycosylation sites follow: N601 and N623. The active-site Proton donor is the D660. N-linked (GlcNAc...) asparagine glycans are attached at residues N835 and N881. The O-linked (Man) serine glycan is linked to S895. N-linked (GlcNAc...) asparagine glycosylation is found at N899, N957, and N970.

This sequence belongs to the glycosyl hydrolase 31 family. In terms of processing, the O-linked saccharide is not identified, but is probably mannose.

It catalyses the reaction Hydrolysis of terminal, non-reducing (1-&gt;4)-linked alpha-D-glucose residues with release of alpha-D-glucose.. Its function is as follows. Hydrolyzes malto-oligosaccharides, but has a low activity toward soluble starch. This chain is Alpha-glucosidase (aglA), found in Aspergillus niger.